We begin with the raw amino-acid sequence, 612 residues long: Alpha-glycerophosphate oxidase (612 aa).

Position 21-49 (21-49 (DLLIIGGGITGAGVALQAAASGLDTGLIE)) interacts with FAD. The segment covering 398–408 (VETSTSEKELD) has biased composition (basic and acidic residues). Residues 398–418 (VETSTSEKELDPSAVSRGSSF) are disordered.

It belongs to the FAD-dependent glycerol-3-phosphate dehydrogenase family. It depends on FAD as a cofactor.

It localises to the cytoplasm. It catalyses the reaction sn-glycerol 3-phosphate + O2 = dihydroxyacetone phosphate + H2O2. In Streptococcus pyogenes serotype M3 (strain ATCC BAA-595 / MGAS315), this protein is Alpha-glycerophosphate oxidase (glpO).